We begin with the raw amino-acid sequence, 509 residues long: Heat shock 70 kDa protein 14 (509 aa).

This sequence belongs to the heat shock protein 70 family. As to quaternary structure, component of ribosome-associated complex (RAC), a heterodimer composed of Hsp70/DnaK-type chaperone HSPA14 and Hsp40/DnaJ-type chaperone DNAJC2.

Its subcellular location is the cytoplasm. It localises to the cytosol. Component of the ribosome-associated complex (RAC), a complex involved in folding or maintaining nascent polypeptides in a folding-competent state. In the RAC complex, binds to the nascent polypeptide chain, while DNAJC2 stimulates its ATPase activity. This is Heat shock 70 kDa protein 14 (Hspa14) from Mus musculus (Mouse).